We begin with the raw amino-acid sequence, 155 residues long: Protein-export protein SecB (155 aa).

This sequence belongs to the SecB family. In terms of assembly, homotetramer, a dimer of dimers. One homotetramer interacts with 1 SecA dimer.

The protein localises to the cytoplasm. One of the proteins required for the normal export of preproteins out of the cell cytoplasm. It is a molecular chaperone that binds to a subset of precursor proteins, maintaining them in a translocation-competent state. It also specifically binds to its receptor SecA. The protein is Protein-export protein SecB of Salmonella heidelberg (strain SL476).